A 316-amino-acid polypeptide reads, in one-letter code: Transcription initiation factor IIB (316 aa).

The segment at 11-42 (PRVTCPNHPDAILVEDYRAGDMICPECGLVVG) adopts a TFIIB-type zinc-finger fold. Zn(2+) is bound by residues cysteine 15, histidine 18, cysteine 34, and cysteine 37. Phosphoserine occurs at positions 70, 76, and 92. 2 repeat units span residues 124–200 (MADR…LILK) and 218–294 (FCSN…LIYP). 4 residues coordinate DNA: lysine 152, arginine 154, lysine 189, and lysine 196. The tract at residues 189–193 (KEIGR) is core promoter DNA-binding. Residue lysine 238 is modified to N6-acetyllysine; by autocatalysis. The necessary for TATA box-bound complex TBP formation stretch occupies residues 244–316 (LVPGRSPISV…DTPVDKLPQL (73 aa)). Position 248 (arginine 248) interacts with DNA. Residues 249 to 252 (SPIS) form a core promoter DNA-binding region. Lysine 272, alanine 281, threonine 284, arginine 286, and arginine 290 together coordinate DNA. A core promoter DNA-binding region spans residues 283 to 286 (VTIR).

The protein belongs to the TFIIB family. Found in a ternary complex with TATA box-bound TBP. Part of a TFIID-containing RNA polymerase II pre-initiation complex (PIC) that is composed of TBP and at least GTF2A1, GTF2A2, GTF2E1, GTF2E2, GTF2F1, GTF2H2, GTF2H3, GTF2H4, GTF2H5, GTF2B, TCEA1, ERCC2, ERCC3, TAF1, TAF2, TAF3, TAF4, TAF5, TAF6, TAF7, TAF8, TAF9, TAF10, TAF11, TAF12 and TAF13. Associates with TFIID-TFIIA (DA complex) to form TFIID-TFIIA-TFIIB (DAB complex), which is then recognized by RNA polymerase II (Pol II). Found in a RNA polymerase II initiation complex. Interacts (via C-terminus) with TBP; this interaction with TATA box-bound TBP guides Pol II into the PIC. Interacts (via N-terminus) with Pol II. Interacts (via C-terminus) with SSU72; this interaction is inhibited by SYMPK. Interacts with NR2F1; this interaction is direct. Interacts with PGR. Interacts with ESR1. Interacts with GTF2F1 (via C-terminus and preferentially via acetylated form); this interaction prevents binding of GTF2B to GTF2F2. Interacts with GTF2F2 (via N-terminus); this interaction is inhibited in presence of GTF2F1. Interacts with the transcription elongation factor TCEA2. Interacts with HSF1 (via transactivation domain). Interacts with GPBP1. In terms of processing, acetylated. Autoacetylated; autoacetylation at Lys-238 stimulates transcription activation.

It localises to the nucleus. The protein localises to the chromosome. It catalyses the reaction L-lysyl-[protein] + acetyl-CoA = N(6)-acetyl-L-lysyl-[protein] + CoA + H(+). Its function is as follows. General transcription factor that plays a role in transcription initiation by RNA polymerase II (Pol II). Involved in the pre-initiation complex (PIC) formation and Pol II recruitment at promoter DNA. Together with the TATA box-bound TBP forms the core initiation complex and provides a bridge between TBP and the Pol II-TFIIF complex. Released from the PIC early following the onset of transcription during the initiation and elongation transition and reassociates with TBP during the next transcription cycle. Associates with chromatin to core promoter-specific regions. Binds to two distinct DNA core promoter consensus sequence elements in a TBP-independent manner; these IIB-recognition elements (BREs) are localized immediately upstream (BREu), 5'-[GC][GC][GA]CGCC-3', and downstream (BREd), 5'-[GA]T[TGA][TG][GT][TG][TG]-3', of the TATA box element. Modulates transcription start site selection. Also exhibits autoacetyltransferase activity that contributes to the activated transcription. In Pongo abelii (Sumatran orangutan), this protein is Transcription initiation factor IIB.